Consider the following 650-residue polypeptide: Acetyl-coenzyme A synthetase (650 aa).

CoA-binding positions include 191–194, Thr311, and Asn335; that span reads RAGR. ATP contacts are provided by residues 387 to 389, 411 to 416, Asp500, and Arg515; these read GEP and DTWWQT. Ser523 is a binding site for CoA. ATP is bound at residue Arg526. Residues Val537, His539, and Val542 each contribute to the Mg(2+) site. Residue Arg584 coordinates CoA. Lys609 carries the N6-acetyllysine modification.

Belongs to the ATP-dependent AMP-binding enzyme family. It depends on Mg(2+) as a cofactor. Acetylated. Deacetylation by the SIR2-homolog deacetylase activates the enzyme.

The catalysed reaction is acetate + ATP + CoA = acetyl-CoA + AMP + diphosphate. Its function is as follows. Catalyzes the conversion of acetate into acetyl-CoA (AcCoA), an essential intermediate at the junction of anabolic and catabolic pathways. AcsA undergoes a two-step reaction. In the first half reaction, AcsA combines acetate with ATP to form acetyl-adenylate (AcAMP) intermediate. In the second half reaction, it can then transfer the acetyl group from AcAMP to the sulfhydryl group of CoA, forming the product AcCoA. This chain is Acetyl-coenzyme A synthetase, found in Shewanella pealeana (strain ATCC 700345 / ANG-SQ1).